The chain runs to 275 residues: uncharacterized protein (275 aa).

A run of 3 helical transmembrane segments spans residues 15-35, 39-59, and 70-90; these read LFLP…FLGS, AIMI…FGLF, and ILYL…VVYL. A disordered region spans residues 140–191; sequence SSKTDMDSQVAEAPQTEEGEPSVNQVPQEAGASHRVGPYQDQGLATDRNGNP.

It localises to the mitochondrion membrane. This is an uncharacterized protein from Arabidopsis thaliana (Mouse-ear cress).